A 607-amino-acid polypeptide reads, in one-letter code: Elongation factor 4 (607 aa).

The tr-type G domain maps to 11 to 193; that stretch reads SKIRNFSIIA…QIVEKVPAPT (183 aa). Residues 23–28 and 140–143 each bind GTP; these read DHGKST and NKID.

Belongs to the TRAFAC class translation factor GTPase superfamily. Classic translation factor GTPase family. LepA subfamily.

The protein localises to the cell membrane. The enzyme catalyses GTP + H2O = GDP + phosphate + H(+). Required for accurate and efficient protein synthesis under certain stress conditions. May act as a fidelity factor of the translation reaction, by catalyzing a one-codon backward translocation of tRNAs on improperly translocated ribosomes. Back-translocation proceeds from a post-translocation (POST) complex to a pre-translocation (PRE) complex, thus giving elongation factor G a second chance to translocate the tRNAs correctly. Binds to ribosomes in a GTP-dependent manner. This is Elongation factor 4 from Bacillus cereus (strain Q1).